Here is a 450-residue protein sequence, read N- to C-terminus: 3-phosphoshikimate 1-carboxyvinyltransferase (450 aa).

A disordered region spans residues 1–26; the sequence is MSAHGDPIPMTAHPSGPLSGTAQVPG. 3-phosphoshikimate contacts are provided by Lys-28, Ser-29, and Arg-33. Lys-28 is a phosphoenolpyruvate binding site. Residues Gly-101 and Arg-129 each coordinate phosphoenolpyruvate. 4 residues coordinate 3-phosphoshikimate: Ser-174, Gln-176, Asp-327, and Lys-354. Residue Gln-176 participates in phosphoenolpyruvate binding. Asp-327 (proton acceptor) is an active-site residue. 2 residues coordinate phosphoenolpyruvate: Arg-358 and Arg-403.

Belongs to the EPSP synthase family. In terms of assembly, monomer.

The protein localises to the cytoplasm. It carries out the reaction 3-phosphoshikimate + phosphoenolpyruvate = 5-O-(1-carboxyvinyl)-3-phosphoshikimate + phosphate. Its pathway is metabolic intermediate biosynthesis; chorismate biosynthesis; chorismate from D-erythrose 4-phosphate and phosphoenolpyruvate: step 6/7. In terms of biological role, catalyzes the transfer of the enolpyruvyl moiety of phosphoenolpyruvate (PEP) to the 5-hydroxyl of shikimate-3-phosphate (S3P) to produce enolpyruvyl shikimate-3-phosphate and inorganic phosphate. The polypeptide is 3-phosphoshikimate 1-carboxyvinyltransferase (Dinoroseobacter shibae (strain DSM 16493 / NCIMB 14021 / DFL 12)).